The chain runs to 322 residues: Sideroflexin-2 (322 aa).

Methionine 1 bears the N-acetylmethionine mark. A run of 5 helical transmembrane segments spans residues 99 to 119 (GMLI…VIFW), 147 to 167 (ALSY…MNMW), 174 to 194 (LVGR…NIPM), 223 to 243 (VGIA…MILL), and 266 to 286 (LQVL…CGLF).

The protein belongs to the sideroflexin family. Expressed in brain, heart, kidney, spleen, thymus, liver, stomach and skin.

It is found in the mitochondrion inner membrane. The protein resides in the mitochondrion outer membrane. The enzyme catalyses L-serine(in) = L-serine(out). In terms of biological role, mitochondrial amino-acid transporter that mediates transport of serine into mitochondria. Involved in mitochondrial iron homeostasis by regulating heme biosynthesis. This chain is Sideroflexin-2, found in Mus musculus (Mouse).